The sequence spans 264 residues: Diphthine synthase (264 aa).

S-adenosyl-L-methionine-binding positions include leucine 10, aspartate 87, valine 90, 115–116, leucine 166, alanine 209, and histidine 234; that span reads SI.

This sequence belongs to the diphthine synthase family. As to quaternary structure, homodimer.

The enzyme catalyses 2-[(3S)-amino-3-carboxypropyl]-L-histidyl-[translation elongation factor 2] + 3 S-adenosyl-L-methionine = diphthine-[translation elongation factor 2] + 3 S-adenosyl-L-homocysteine + 3 H(+). The protein operates within protein modification; peptidyl-diphthamide biosynthesis. Its function is as follows. S-adenosyl-L-methionine-dependent methyltransferase that catalyzes the trimethylation of the amino group of the modified target histidine residue in translation elongation factor 2 (EF-2), to form an intermediate called diphthine. The three successive methylation reactions represent the second step of diphthamide biosynthesis. The polypeptide is Diphthine synthase (Thermococcus kodakarensis (strain ATCC BAA-918 / JCM 12380 / KOD1) (Pyrococcus kodakaraensis (strain KOD1))).